A 226-amino-acid polypeptide reads, in one-letter code: Octanoyltransferase (226 aa).

Residues 34-216 (GEANELVWLL…AWTEAFGPVR (183 aa)) enclose the BPL/LPL catalytic domain. Substrate is bound by residues 73–80 (RGGEYTYH), 145–147 (AIG), and 158–160 (GIA). The active-site Acyl-thioester intermediate is Cys176.

The protein belongs to the LipB family.

It is found in the cytoplasm. The enzyme catalyses octanoyl-[ACP] + L-lysyl-[protein] = N(6)-octanoyl-L-lysyl-[protein] + holo-[ACP] + H(+). The protein operates within protein modification; protein lipoylation via endogenous pathway; protein N(6)-(lipoyl)lysine from octanoyl-[acyl-carrier-protein]: step 1/2. Functionally, catalyzes the transfer of endogenously produced octanoic acid from octanoyl-acyl-carrier-protein onto the lipoyl domains of lipoate-dependent enzymes. Lipoyl-ACP can also act as a substrate although octanoyl-ACP is likely to be the physiological substrate. In Maricaulis maris (strain MCS10) (Caulobacter maris), this protein is Octanoyltransferase.